The chain runs to 661 residues: Kininogen-1 (661 aa).

Residues 1–20 (MKLITTLLLCSGLLLTLTQG) form the signal peptide. One can recognise a Cystatin kininogen-type 1 domain in the interval 28-131 (CNDEAVFQAV…TQTCKIAPSK (104 aa)). Cystine bridges form between Cys28-Cys631, Cys83-Cys94, Cys107-Cys125, Cys141-Cys144, Cys205-Cys217, Cys228-Cys247, Cys263-Cys266, Cys327-Cys339, and Cys350-Cys369. The N-linked (GlcNAc...) asparagine glycan is linked to Asn82. In terms of domain architecture, Cystatin kininogen-type 2 spans 150-253 (TDSPDLEPVL…SQSCTLYSGD (104 aa)). N-linked (GlcNAc...) asparagine glycosylation is found at Asn168 and Asn204. Asn242 is a glycosylation site (N-linked (GlcNAc...) asparagine). Residues 272-375 (VDSPELKEVL…TVKCQALDMT (104 aa)) form the Cystatin kininogen-type 3 domain. Phosphoserine is present on Ser331. Disordered regions lie at residues 405–471 (YIAR…LGHG), 485–583 (DGDD…FQDS), and 626–661 (ATSP…DALS). Basic residues-rich tracts occupy residues 434-471 (KANK…LGHG) and 492-526 (TVGH…HGKH). The segment covering 541-555 (TESLASSSEYSTTST) has biased composition (low complexity). Acidic residues predominate over residues 650-661 (EFSDFDLLDALS).

As to quaternary structure, isoform LMW interacts with CRISP3. In terms of processing, bradykinin is released from kininogen by plasma kallikrein. Post-translationally, phosphorylated by FAM20C in the extracellular medium. Bradykinin is inactivated by ACE, which removes the dipeptide Arg-Phe from its C-terminus. In terms of tissue distribution, plasma.

It is found in the secreted. It localises to the extracellular space. In terms of biological role, kininogens are inhibitors of thiol proteases. HMW-kininogen plays an important role in blood coagulation by helping to position optimally prekallikrein and factor XI next to factor XII; HMW-kininogen inhibits the thrombin- and plasmin-induced aggregation of thrombocytes. LMW-kininogen inhibits the aggregation of thrombocytes. LMW-kininogen is in contrast to HMW-kininogen not involved in blood clotting. Functionally, the active peptide bradykinin is a potent vasodilatator that is released from HMW-kininogen shows a variety of physiological effects: (A) influence in smooth muscle contraction, (B) induction of hypotension, (C) natriuresis and diuresis, (D) decrease in blood glucose level, (E) it is a mediator of inflammation and causes (E1) increase in vascular permeability, (E2) stimulation of nociceptors (4E3) release of other mediators of inflammation (e.g. prostaglandins), (F) it has a cardioprotective effect (directly via bradykinin action, indirectly via endothelium-derived relaxing factor action). This is Kininogen-1 (Kng1) from Mus musculus (Mouse).